The following is a 662-amino-acid chain: Interferon-induced GTP-binding protein Mx1 (662 aa).

Met1 bears the N-acetylmethionine mark. The Dynamin-type G domain maps to 67 to 340 (DLALPAIAVI…LITHICKSLP (274 aa)). Residues 77–84 (GDQSSGKS) are G1 motif. 77–84 (GDQSSGKS) contributes to the GTP binding site. The segment at 102-104 (VTR) is G2 motif. The G3 motif stretch occupies residues 178–181 (DLPG). GTP contacts are provided by residues 178 to 182 (DLPGI) and 247 to 250 (TKPD). The G4 motif stretch occupies residues 247 to 250 (TKPD). The tract at residues 279–282 (KCRG) is G5 motif. Residues 341–366 (LLENQIRESHQRITEELQKYGVDVPE) form a bundle signaling element (BSE) region. A middle domain region spans residues 366–533 (EDENEKMFFL…HFQMEQIVYC (168 aa)). A stalk region spans residues 367 to 632 (DENEKMFFLI…KDTYSWLLKE (266 aa)). Residues 554–557 (KKKK) form a critical for lipid-binding region. Positions 574-662 (MEEIFQHLMA…ARRRLAQFPG (89 aa)) constitute a GED domain.

The protein belongs to the TRAFAC class dynamin-like GTPase superfamily. Dynamin/Fzo/YdjA family. As to quaternary structure, homooligomer. Oligomerizes into multimeric filamentous or ring-like structures by virtue of its stalk domain. Oligomerization is critical for GTPase activity, protein stability, and recognition of viral target structures. Interacts with TRPC1, TRPC3, TRPC4, TRPC5, TRPC6 and TRPC7. Interacts with HSPA5. Interacts with TUBB/TUBB5. Interacts with DDX39A and DDX39B. ISGylated.

The protein resides in the cytoplasm. Its subcellular location is the endoplasmic reticulum membrane. It localises to the perinuclear region. In terms of biological role, interferon-induced dynamin-like GTPase with antiviral activity. This is Interferon-induced GTP-binding protein Mx1 (MX1) from Pongo abelii (Sumatran orangutan).